Consider the following 717-residue polypeptide: PAN2-PAN3 deadenylation complex subunit PAN3 (717 aa).

The C3H1-type zinc finger occupies 8-37 (WARDVPCRNVIIYGFCKKKTEGCPFKHDDD). The tract at residues 37-100 (DDIATPTSTP…HTGSKSQVPK (64 aa)) is disordered. Residues 62-90 (PSKISVSSLPSLNSQPSSTAPTSAPNATA) are compositionally biased toward low complexity. Polar residues predominate over residues 91 to 100 (HTGSKSQVPK). A pseudokinase domain region spans residues 323–585 (QLFPSGGNLP…ATIIEKYIGL (263 aa)). Residues Arg-378, 428–435 (DYYPNATS), and 482–483 (DK) contribute to the ATP site. A coiled-coil region spans residues 586–624 (DVVFKVMEAQQTYSEYAENVLSRELENGRLFRLICKLNF). Residues 625–717 (IFGRVENRLD…VDKTFRAMTL (93 aa)) are knob domain.

The protein belongs to the protein kinase superfamily. PAN3 family. Homodimer. Forms a heterotrimer with a catalytic subunit PAN2 to form the poly(A)-nuclease (PAN) deadenylation complex. Interacts (via PAM-2 motif) with poly(A)-binding protein PAB1 (via PABC domain), conferring substrate specificity of the enzyme complex.

It is found in the cytoplasm. In terms of biological role, regulatory subunit of the poly(A)-nuclease (PAN) deadenylation complex, one of two cytoplasmic mRNA deadenylases involved in mRNA turnover. PAN specifically shortens poly(A) tails of RNA and the activity is stimulated by poly(A)-binding protein PAB1. PAN deadenylation is followed by rapid degradation of the shortened mRNA tails by the CCR4-NOT complex. Deadenylated mRNAs are then degraded by two alternative mechanisms, namely exosome-mediated 3'-5' exonucleolytic degradation, or deadenylation-dependent mRNA decaping and subsequent 5'-3' exonucleolytic degradation by XRN1. May also be involved in post-transcriptional maturation of mRNA poly(A) tails. PAN3 acts as a positive regulator for PAN activity, recruiting the catalytic subunit PAN2 to mRNA via its interaction with RNA and with PAB1. In Candida glabrata (strain ATCC 2001 / BCRC 20586 / JCM 3761 / NBRC 0622 / NRRL Y-65 / CBS 138) (Yeast), this protein is PAN2-PAN3 deadenylation complex subunit PAN3.